The chain runs to 835 residues: Protein translocase subunit SecA (835 aa).

ATP is bound by residues glutamine 85, 103–107, and aspartate 492; that span reads GEGKT. Zn(2+) is bound by residues cysteine 819, cysteine 821, cysteine 830, and cysteine 831.

It belongs to the SecA family. In terms of assembly, monomer and homodimer. Part of the essential Sec protein translocation apparatus which comprises SecA, SecYEG and auxiliary proteins SecDF. Other proteins may also be involved. The cofactor is Zn(2+).

The protein resides in the cell membrane. The protein localises to the cytoplasm. The catalysed reaction is ATP + H2O + cellular proteinSide 1 = ADP + phosphate + cellular proteinSide 2.. Functionally, part of the Sec protein translocase complex. Interacts with the SecYEG preprotein conducting channel. Has a central role in coupling the hydrolysis of ATP to the transfer of proteins into and across the cell membrane, serving as an ATP-driven molecular motor driving the stepwise translocation of polypeptide chains across the membrane. The polypeptide is Protein translocase subunit SecA (Clostridium botulinum (strain Okra / Type B1)).